A 441-amino-acid chain; its full sequence is MIRGKIDILVVDDDVSHCTILQALLRGWGYNVALAYSGHDALAQVREKVFDLVLCDVRMAEMDGIATLKEIKALNPAIPILIMTAFSSVETAVEALKAGALDYLIKPLDFDRLQETLEKALAHTRETGAELPSASAAQFGMIGSSPAMQHLLNEIAMVAPSDATVLIHGDSGTGKELVARALHACSARSDKPLVTLNCAALNESLLESELFGHEKGAFTGADKRREGRFVEADGGTLFLDEIGDISPLMQVRLLRAIQEREVQRVGSNQTISVDVWLIAATHRDLAEEVSAGRFRQDLYYRLNVVAIEMPSLRQRREDIPLLADHFLRRFAERNRKAVKGFTPQAMDLLIHYDWPGNIRELENAIERAVVLLTGEYISERELPLAIAATPIKAENSAEIQPLVDVEKEVILAALEKTGGNKTEAARQLGITRKTLLAKLSR.

Residues 7 to 121 form the Response regulatory domain; it reads DILVVDDDVS…RLQETLEKAL (115 aa). Aspartate 56 is modified (4-aspartylphosphate). Residues 141–370 form the Sigma-54 factor interaction domain; it reads MIGSSPAMQH…LENAIERAVV (230 aa). The ATP site is built by glycine 172, threonine 173, arginine 329, and arginine 359. The segment at residues 421–440 is a DNA-binding region (H-T-H motif); the sequence is KTEAARQLGITRKTLLAKLS.

Phosphorylated by ZraS.

The protein localises to the cytoplasm. With respect to regulation, activity of the ZraS/ZraR two-component system is repressed by the zinc-bound form of ZraP, which probably interacts with the periplasmic region of ZraS. Its function is as follows. Part of the Zra signaling pathway, an envelope stress response (ESR) system composed of the periplasmic accessory protein ZraP, the histidine kinase ZraS and the transcriptional regulator ZraR. The ZraPSR system contributes to antibiotic resistance and is important for membrane integrity in the presence of membrane-targeting biocides. ZraR is a member of the two-component regulatory system ZraS/ZraR. When activated by ZraS, acts in conjunction with sigma-54 to regulate the expression of zraP in the presence of high Zn(2+) or Pb(2+) concentrations. Also positively autoregulates the expression of the zraSR operon. The protein is Transcriptional regulatory protein ZraR (zraR) of Salmonella typhi.